A 363-amino-acid chain; its full sequence is Cytochrome b (363 aa).

The next 4 membrane-spanning stretches (helical) occupy residues 23 to 43, 67 to 89, 102 to 122, and 164 to 184; these read FGFI…MLSF, WFVR…LHIM, SWYS…VGYV, and FFSI…FHLY. Residues His-73 and His-87 each coordinate heme b. Residues His-168 and His-182 each coordinate heme b. His-187 lines the a ubiquinone pocket. Transmembrane regions (helical) follow at residues 210 to 230, 271 to 291, 310 to 330, and 332 to 352; these read VLFS…VQSG, VFPT…LLVL, VWTT…SIGK, and VVHV…VLFI.

This sequence belongs to the cytochrome b family. In terms of assembly, the main subunits of complex b-c1 are: cytochrome b, cytochrome c1 and the Rieske protein. The cofactor is heme b.

The protein localises to the mitochondrion inner membrane. Its function is as follows. Component of the ubiquinol-cytochrome c reductase complex (complex III or cytochrome b-c1 complex) that is part of the mitochondrial respiratory chain. The b-c1 complex mediates electron transfer from ubiquinol to cytochrome c. Contributes to the generation of a proton gradient across the mitochondrial membrane that is then used for ATP synthesis. The protein is Cytochrome b (MT-CYB) of Theileria annulata.